A 424-amino-acid polypeptide reads, in one-letter code: MKFSIPPGVFDIIPTNTQEIWKSSYLWDFVERTIRKTVRDYGYQEIRTPLFERTELFQRSVGETSDIISKEMYTFEDKGGRSMSLRPEGTAPVMRSFIENQLHTIAPLQKLFYIAPMFRYERAQAGRYRQHHQFGAEAIGNSSPEQDAELIDLLYTLYKRLGLQNLSLNINSIGTISCRHTFRQALKDYLKPHLNNLSSDSQNRFETNPLRILDSKNAQDKQIVADAPSILDFLDEDSQIHFEQLKKLLKQLKIPYQVNPLLVRGLDYYNKTVFEVVVGELGAQNSIGGGGRYDGLLRELGGPDLPSIGFGTGIERIIQTMINQGIPLPSPCHPSLFLIPMGDEAKQLCFTLTHELRQQGIPTQMDFSGKKLGKVLQYADQIESTYVVVIGENELQTQEIELKELASGKKYKLTIDELAPTLKN.

This sequence belongs to the class-II aminoacyl-tRNA synthetase family. In terms of assembly, homodimer.

Its subcellular location is the cytoplasm. It carries out the reaction tRNA(His) + L-histidine + ATP = L-histidyl-tRNA(His) + AMP + diphosphate + H(+). In Protochlamydia amoebophila (strain UWE25), this protein is Histidine--tRNA ligase.